The following is a 186-amino-acid chain: ADP-ribosylation factor-like protein 8B (186 aa).

The note=Mediates targeting to membranes intramembrane region spans 1 to 19 (MLALISRLLDWFRSLFWKE). GTP is bound by residues 29 to 35 (QYSGKTT), 71 to 75 (DIGGQ), and 130 to 133 (NKRD). Lys-141 participates in a covalent cross-link: Glycyl lysine isopeptide (Lys-Gly) (interchain with G-Cter in ubiquitin).

The protein belongs to the small GTPase superfamily. Arf family. In terms of assembly, interacts with tubulin. Interacts with BORCS5; recruits ARL8B to lysosomes. Interacts with VPS41; the interaction mediates the recruitment of the HOPS complex to lysosomes. Interacts (GTP-bound form) with PLEKHM2 (via RUN domain); the interaction is required to recruit the motor protein kinesin-1 on lysosomes. Interacts (GTP-bound form) with PLEKHM1 (via RUN domain); the interaction is required for PLEKHM1 localization to lysosomes and for ARL8B function in delivery and degradation of endocytic and autophagic cargo in lysosomes. PLEKHM1 and PLEKHM2 compete for interaction with ARL8B. Interacts (GTP-bound form) with RUFY1; the interaction is required for RUFY1 endosomal location. When GTP-bound, interacts with RUFY3 and RUFY4, but not with RUFY1, nor RUFY2. Ubiquitinated at Lys-141 by RNF167, leading to its degradation.

The protein localises to the late endosome membrane. The protein resides in the lysosome membrane. It localises to the cytoplasm. Its subcellular location is the cytoskeleton. It is found in the spindle. The protein localises to the cell projection. The protein resides in the axon. It localises to the synapse. Its subcellular location is the cytolytic granule membrane. It is found in the early endosome membrane. The catalysed reaction is GTP + H2O = GDP + phosphate + H(+). In terms of biological role, small GTPase which cycles between active GTP-bound and inactive GDP-bound states. In its active state, binds to a variety of effector proteins playing a key role in the regulation of lysosomal positioning which is important for nutrient sensing, natural killer cell-mediated cytotoxicity and antigen presentation. Along with its effectors, orchestrates lysosomal transport and fusion. Localizes specifically to lysosomal membranes and mediates anterograde lysosomal motility by recruiting PLEKHM2, which in turn recruits the motor protein kinesin-1 on lysosomes. Required for lysosomal and cytolytic granule exocytosis. Critical factor involved in NK cell-mediated cytotoxicity. Drives the polarization of cytolytic granules and microtubule-organizing centers (MTOCs) toward the immune synapse between effector NK lymphocytes and target cells. In neurons, mediates the anterograde axonal long-range transport of presynaptic lysosome-related vesicles required for presynaptic biogenesis and synaptic function. Also acts as a regulator of endosome to lysosome trafficking pathways of special significance for host defense. Recruits RUFY1 onto early endosomes regulating endosomes to trans-Golgi network proteins retrieval. Regulates cargo trafficking to lysosomes by binding to PLEKHM1 and recruiting the HOPS subunit VPS41, resulting in functional assembly of the HOPS complex on lysosomal membranes. Plays an important role in cargo delivery to lysosomes for antigen presentation and microbial killing. Directs the intersection of CD1d with lipid antigens in lysosomes, and plays a role in intersecting phagosomes with lysosomes to generate phagolysosomes that kill microbes. Involved in the process of MHC II presentation. Regulates the delivery of antigens to lysosomes and the formation of MHC II-peptide complexes through the recruitment of the HOPS complex to lysosomes allowing the fusion of late endosomes to lysosomes. May play a role in chromosome segregation. This chain is ADP-ribosylation factor-like protein 8B (ARL8B), found in Macaca fascicularis (Crab-eating macaque).